Here is a 250-residue protein sequence, read N- to C-terminus: MLREHAMYTHHCFVLACCLGAALPAPASDLFAPAELSDQELSQLRGRYVLPGRIVSFGVTMSSTWQNASGQVLGARVDLQVRQNLARPVLNVTLVDRPGDAPPPVAGNGQVLGGAGLAQTQGVSQSIRTAGDHNSASNGVSIEVRHGEAPPPLSGGTPLEGALALSGETGTVKVTPNGGALQLAIQASGQGASLQSLGAGGLVQSVALSGNRNLVQNLAALEVMLKDRPGADPALNCAWEQLRALRPSGY.

Residues 1 to 27 (MLREHAMYTHHCFVLACCLGAALPAPA) form the signal peptide.

Belongs to the FapE family. In terms of assembly, a minor component of purified amyloid fibrils. Fibrils are resistant to boiling in 2% (weight/vol) SDS and require &gt;90% (vol/vol) formic acid to dissolve.

The protein localises to the fimbrium. The protein resides in the secreted. A minor component of the functional amyloid in this bacterium. Upon overexpression of the endogenous six-gene locus (fapA-fapF), cells form large clumps during liquid growth, make large amounts of biofilm and produce amyloid fibrils. The sequence is that of Functional amyloid sbunit FapE from Pseudomonas aeruginosa (strain ATCC 15692 / DSM 22644 / CIP 104116 / JCM 14847 / LMG 12228 / 1C / PRS 101 / PAO1).